A 274-amino-acid polypeptide reads, in one-letter code: Putative ankyrin repeat protein R597 (274 aa).

ANK repeat units follow at residues 78-112 (VGLPSLGYFTKNKDEFHNSLELMKLLLQYDMNNND), 114-144 (PISEYLYNAVKQNNFEKVKLLIDNGINSLKI), 146-174 (SRYHFENKYIYNNHEIVKYMIDNGVDIQG), and 176-205 (NLSYALHSCIISDNNDGVEYYFNIGANIND).

The polypeptide is Putative ankyrin repeat protein R597 (Acanthamoeba polyphaga mimivirus (APMV)).